Here is a 229-residue protein sequence, read N- to C-terminus: Golgi to ER traffic protein 1 (229 aa).

Topologically, residues 1 to 14 (MGILAALDLHPYTL) are lumenal. The chain crosses the membrane as a helical span at residues 15 to 34 (VVSSFTVLLIQQLVGFIGKS). Topologically, residues 35–122 (TIQEFAWLFY…KINSLVGVVL (88 aa)) are cytoplasmic. Residues 60 to 117 (HTKKQEELHKLNREKRSISAQDEYAKWTKLNRQAEKLTAEVKSLSDDIAKDKSKINSL) adopt a coiled-coil conformation. Residues 123–143 (LFLTTLPLWVFRLWFRKSVLF) form a helical membrane-spanning segment. Topologically, residues 144–167 (YLPTGVFPYYVERVLAIPFFASGS) are lumenal. Residues 168–184 (VGLTVWMFAVNNVISSV) form a helical membrane-spanning segment. Over 185-229 (LFLLTFPFKPSVPIPIRQTKVEEVVPESAESKESSPEVIDIADAN) the chain is Cytoplasmic. The segment covering 210-219 (PESAESKESS) has biased composition (basic and acidic residues). Positions 210–229 (PESAESKESSPEVIDIADAN) are disordered.

Belongs to the WRB/GET1 family. As to quaternary structure, component of the Golgi to ER traffic (GET) complex, which is composed of GET1, GET2 and GET3. Within the complex, GET1 and GET2 form a heterotetramer which is stabilized by phosphatidylinositol binding and which binds to the GET3 homodimer.

The protein resides in the endoplasmic reticulum membrane. Its subcellular location is the golgi apparatus membrane. In terms of biological role, required for the post-translational delivery of tail-anchored (TA) proteins to the endoplasmic reticulum. Together with GET2, acts as a membrane receptor for soluble GET3, which recognizes and selectively binds the transmembrane domain of TA proteins in the cytosol. The GET complex cooperates with the HDEL receptor ERD2 to mediate the ATP-dependent retrieval of resident ER proteins that contain a C-terminal H-D-E-L retention signal from the Golgi to the ER. The sequence is that of Golgi to ER traffic protein 1 from Scheffersomyces stipitis (strain ATCC 58785 / CBS 6054 / NBRC 10063 / NRRL Y-11545) (Yeast).